The chain runs to 200 residues: Probable GTP-binding protein EngB (200 aa).

Residues 25-199 (SGYEVAFAGR…ISVLDRWYEW (175 aa)) form the EngB-type G domain. GTP is bound by residues 33-40 (GRSNAGKS), 60-64 (GRTQL), 78-81 (DLPG), 145-148 (TKAD), and 178-180 (FSS). Residues serine 40 and threonine 62 each coordinate Mg(2+).

It belongs to the TRAFAC class TrmE-Era-EngA-EngB-Septin-like GTPase superfamily. EngB GTPase family. Mg(2+) is required as a cofactor.

Its function is as follows. Necessary for normal cell division and for the maintenance of normal septation. In Legionella pneumophila (strain Paris), this protein is Probable GTP-binding protein EngB.